We begin with the raw amino-acid sequence, 491 residues long: Nucleoside transporter 1.2 (491 aa).

6 helical membrane passes run 27–47, 82–102, 109–129, 136–156, 173–193, and 209–229; these read FYVYVVAFMCGVSMMMSVNAV, YNLIGIVTSLIMEPLTLLSWF, VRLLGGLVILIVEIIVLMVVP, AGAVATICCTGFIGGFGKSIF, STMMGGVGMSGVLTSLLQIIV, and KIYYGLDVGIQGMTFVALILL. Positions 261–273 are enriched in basic and acidic residues; it reads HTDEHPTHDKEGR. Disordered stretches follow at residues 261 to 280 and 290 to 309; these read HTDEHPTHDKEGRNSSSGKE and AAAKSEGPDAVEESSWPHEV. N-linked (GlcNAc...) asparagine glycosylation occurs at Asn-274. 5 helical membrane passes run 333-353, 361-381, 395-415, 427-447, and 460-480; these read MFVACAFNFLITLFLFPGIAV, WFSTIAVFIFNVFDVLGRFSP, WIIVAASFARVIFVPLLLLHS, VMEVIFGFSNGYVGSMALVLG, and FVAGTLMGISILVGGTIGTVL.

Belongs to the SLC29A/ENT transporter (TC 2.A.57) family.

The protein resides in the membrane. The enzyme catalyses adenosine(in) + H(+)(in) = adenosine(out) + H(+)(out). It carries out the reaction uridine(in) + H(+)(in) = uridine(out) + H(+)(out). Sodium-independent nucleoside:H(+) symporter; transports adenosine with high affinity and uridine with moderate affinity. Can transport cytidine and thymidine. This chain is Nucleoside transporter 1.2, found in Leishmania donovani.